An 828-amino-acid polypeptide reads, in one-letter code: BEN domain-containing protein 3 (828 aa).

A Glycyl lysine isopeptide (Lys-Gly) (interchain with G-Cter in SUMO); alternate cross-link involves residue K20. K20 participates in a covalent cross-link: Glycyl lysine isopeptide (Lys-Gly) (interchain with G-Cter in SUMO1); alternate. K20 is covalently cross-linked (Glycyl lysine isopeptide (Lys-Gly) (interchain with G-Cter in SUMO2); alternate). Glycyl lysine isopeptide (Lys-Gly) (interchain with G-Cter in SUMO2) cross-links involve residues K41, K56, K58, K73, K128, K129, K137, K142, and K158. Residues 56 to 58 (KRK) carry the Nuclear localization signal motif. Phosphoserine is present on S164. The interval 164-184 (SPSSLRLLNEPQKRDCGSTGA) is disordered. K176 is covalently cross-linked (Glycyl lysine isopeptide (Lys-Gly) (interchain with G-Cter in SUMO2)). The 102-residue stretch at 242-343 (PPPEYQLTAA…DFFSRFWAQR (102 aa)) folds into the BEN 1 domain. Position 379 is a phosphoserine (S379). Residues 387–487 (ASDHVVDTQD…DELEGLGLDA (101 aa)) enclose the BEN 2 domain. Residue K427 forms a Glycyl lysine isopeptide (Lys-Gly) (interchain with G-Cter in SUMO2) linkage. Residues 483 to 504 (LGLDAGSEGDPPRDDCYDSSSL) are disordered. S489 bears the Phosphoserine mark. A Glycyl lysine isopeptide (Lys-Gly) (interchain with G-Cter in SUMO); alternate cross-link involves residue K512. K512 participates in a covalent cross-link: Glycyl lysine isopeptide (Lys-Gly) (interchain with G-Cter in SUMO2); alternate. Residue K528 forms a Glycyl lysine isopeptide (Lys-Gly) (interchain with G-Cter in SUMO2) linkage. The region spanning 548-650 (VPGADCLLSK…ERCRRRDTEQ (103 aa)) is the BEN 3 domain. Residue K700 forms a Glycyl lysine isopeptide (Lys-Gly) (interchain with G-Cter in SUMO2) linkage. The region spanning 715–816 (VPSPYLLSDK…ERCRRPNRKK (102 aa)) is the BEN 4 domain.

In terms of assembly, homooligomer, probably a homooctamer. Interacts with HDAC2 and HDAC3, but not HDAC1. Interacts with SALL4. Interacts with SMARCA5/SNF2H, BAZ2A/TIP5 and USP21. Interacts with the nucleosome remodeling and histone deacetylase (NuRD) repressor complex. Interacts (via BEN domains 1 and 3) with ERCC6L (via N-terminal TPR repeat); the interaction is direct. In terms of processing, sumoylated at Lys-20 by SUMO1 and at Lys-512 by SUMO1, SUMO2 and SUMO3. Sumoylation probably occurs sequentially, with that of Lys-20 preceding that of Lys-512. It does not alter association with heterochromatin, but is required for the repression of transcription. Expressed at least in heart, kidney, liver, ovary and spleen, with highest levels in spleen and lowest in heart. Expressed on the surface of T-cells.

Its subcellular location is the nucleus. The protein resides in the nucleolus. Its function is as follows. Transcriptional repressor which associates with the NoRC (nucleolar remodeling complex) complex and plays a key role in repressing rDNA transcription. The sumoylated form modulates the stability of the NoRC complex component BAZ2A/TIP5 by controlling its USP21-mediated deubiquitination. Binds to unmethylated major satellite DNA and is involved in the recruitment of the Polycomb repressive complex 2 (PRC2) to major satellites. Stimulates the ERCC6L translocase and ATPase activities. In Homo sapiens (Human), this protein is BEN domain-containing protein 3 (BEND3).